Consider the following 203-residue polypeptide: MKSRNGPLRVGIGGPVGSGKTALTEKLCKAMRDDYSVAVVTNDIYTTEDAEALVRMQALPSDRIVGVETGGCPHTAIREDATINLQAIAGLNQRIPDLDVVFIESGGDNLAATFSPDLADITIYVISVCQGEEIPRKGGPGITRSDLLVINKKDLAPYVGADLEVKDRDATRMRASRPFVFSDMKRGDGVSSIVSFLREQGGL.

Residue 14-21 (GPVGSGKT) participates in GTP binding.

This sequence belongs to the SIMIBI class G3E GTPase family. UreG subfamily. In terms of assembly, homodimer. UreD, UreF and UreG form a complex that acts as a GTP-hydrolysis-dependent molecular chaperone, activating the urease apoprotein by helping to assemble the nickel containing metallocenter of UreC. The UreE protein probably delivers the nickel.

The protein resides in the cytoplasm. Its function is as follows. Facilitates the functional incorporation of the urease nickel metallocenter. This process requires GTP hydrolysis, probably effectuated by UreG. This chain is Urease accessory protein UreG, found in Rhizobium leguminosarum bv. viciae.